A 399-amino-acid chain; its full sequence is V-set and immunoglobulin domain-containing protein 4 (399 aa).

The N-terminal stretch at 1 to 19 is a signal peptide; that stretch reads MGILLGLLLLGHLTVDTYG. Residues 20–283 are Extracellular-facing; sequence RPILEVPESV…TSAGPGKSLP (264 aa). 2 consecutive Ig-like domains span residues 21 to 131 and 143 to 226; these read PILE…DKIT and PTVT…SDIV. Disulfide bonds link Cys-41–Cys-113 and Cys-165–Cys-211. The helical transmembrane segment at 284 to 304 threads the bilayer; the sequence is VFAIILIISLCCMVVFTMAYI. Residues 305–399 lie on the Cytoplasmic side of the membrane; the sequence is MLCRKTSQQE…FLATEGKSVC (95 aa).

Abundantly expressed in several fetal tissues. In adult tissues, highest expression in lung and placenta. Expressed in resting macrophages.

It localises to the membrane. Functionally, phagocytic receptor, strong negative regulator of T-cell proliferation and IL2 production. Potent inhibitor of the alternative complement pathway convertases. This Homo sapiens (Human) protein is V-set and immunoglobulin domain-containing protein 4 (VSIG4).